We begin with the raw amino-acid sequence, 118 residues long: Large ribosomal subunit protein uL18 (118 aa).

The protein belongs to the universal ribosomal protein uL18 family. Part of the 50S ribosomal subunit; part of the 5S rRNA/L5/L18/L25 subcomplex. Contacts the 5S and 23S rRNAs.

This is one of the proteins that bind and probably mediate the attachment of the 5S RNA into the large ribosomal subunit, where it forms part of the central protuberance. In Nitratiruptor sp. (strain SB155-2), this protein is Large ribosomal subunit protein uL18.